We begin with the raw amino-acid sequence, 397 residues long: NADH-quinone oxidoreductase subunit D (397 aa).

This sequence belongs to the complex I 49 kDa subunit family. In terms of assembly, NDH-1 is composed of 14 different subunits. Subunits NuoB, C, D, E, F, and G constitute the peripheral sector of the complex.

The protein resides in the cell inner membrane. The enzyme catalyses a quinone + NADH + 5 H(+)(in) = a quinol + NAD(+) + 4 H(+)(out). Its function is as follows. NDH-1 shuttles electrons from NADH, via FMN and iron-sulfur (Fe-S) centers, to quinones in the respiratory chain. The immediate electron acceptor for the enzyme in this species is believed to be ubiquinone. Couples the redox reaction to proton translocation (for every two electrons transferred, four hydrogen ions are translocated across the cytoplasmic membrane), and thus conserves the redox energy in a proton gradient. The polypeptide is NADH-quinone oxidoreductase subunit D (Magnetococcus marinus (strain ATCC BAA-1437 / JCM 17883 / MC-1)).